Here is a 289-residue protein sequence, read N- to C-terminus: Cyclin-dependent kinase inhibitor 4 (289 aa).

3 disordered regions span residues 1–31 (MGKY…ESSI), 56–160 (LQQQ…VSES), and 227–248 (SESN…TTPE). Gly residues predominate over residues 13 to 28 (AGAGAGGGGGGGGGGE). Over residues 56–80 (LQQQQQRCLLQKPSSPSSLPPTSAS) the composition is skewed to low complexity. The span at 134–144 (CGRNPNPRSNL) shows a compositional bias: polar residues.

Belongs to the CDI family. ICK/KRP subfamily. As to quaternary structure, specifically interacts with CDKA-1, but not with CDKB1-1. Interacts with CYCD4-1. Binds to FBL17. As to expression, expressed in leaves and flowers and at lower levels in roots.

The protein localises to the nucleus. Its subcellular location is the nucleoplasm. Its function is as follows. Binds and inhibits CYCD2-1/CDKA-1 complex kinase activity. May target specifically CDKA-1. This Arabidopsis thaliana (Mouse-ear cress) protein is Cyclin-dependent kinase inhibitor 4 (KRP4).